The chain runs to 325 residues: Glutarate 2-hydroxylase (325 aa).

Fe cation contacts are provided by H160, D162, and H292.

The protein belongs to the glutarate hydroxylase family. Homotetramer. The cofactor is Fe(2+).

It catalyses the reaction glutarate + 2-oxoglutarate + O2 = (S)-2-hydroxyglutarate + succinate + CO2. Its pathway is amino-acid degradation. Acts as an alpha-ketoglutarate-dependent dioxygenase catalyzing hydroxylation of glutarate (GA) to L-2-hydroxyglutarate (L2HG). Functions in a L-lysine degradation pathway that proceeds via cadaverine, glutarate and L-2-hydroxyglutarate. This is Glutarate 2-hydroxylase from Escherichia coli O127:H6 (strain E2348/69 / EPEC).